The following is a 226-amino-acid chain: uncharacterized protein (226 aa).

The 152-residue stretch at 75–226 folds into the N-acetyltransferase domain; it reads YTIRNVTKDD…KGWLRMVKRI (152 aa).

This sequence belongs to the acetyltransferase family.

This is an uncharacterized protein from Methanocaldococcus jannaschii (strain ATCC 43067 / DSM 2661 / JAL-1 / JCM 10045 / NBRC 100440) (Methanococcus jannaschii).